Reading from the N-terminus, the 151-residue chain is Macrodomain Ter protein (151 aa).

This sequence belongs to the MatP family. Homodimer.

Its subcellular location is the cytoplasm. In terms of biological role, required for spatial organization of the terminus region of the chromosome (Ter macrodomain) during the cell cycle. Prevents early segregation of duplicated Ter macrodomains during cell division. Binds specifically to matS, which is a 13 bp signature motif repeated within the Ter macrodomain. In Escherichia fergusonii (strain ATCC 35469 / DSM 13698 / CCUG 18766 / IAM 14443 / JCM 21226 / LMG 7866 / NBRC 102419 / NCTC 12128 / CDC 0568-73), this protein is Macrodomain Ter protein.